Reading from the N-terminus, the 404-residue chain is S-adenosylmethionine synthase (404 aa).

Histidine 18 contacts ATP. Residue aspartate 20 participates in Mg(2+) binding. Position 46 (glutamate 46) interacts with K(+). Residues glutamate 59 and glutamine 102 each contribute to the L-methionine site. The segment at 102–112 is flexible loop; it reads QSPEIAQGVDH. ATP is bound by residues 178–180, 249–250, aspartate 258, 264–265, alanine 281, and lysine 285; these read DGK, KF, and RK. An L-methionine-binding site is contributed by aspartate 258. Lysine 289 contributes to the L-methionine binding site.

This sequence belongs to the AdoMet synthase family. Homotetramer; dimer of dimers. The cofactor is Mg(2+). Requires K(+) as cofactor.

Its subcellular location is the cytoplasm. It catalyses the reaction L-methionine + ATP + H2O = S-adenosyl-L-methionine + phosphate + diphosphate. Its pathway is amino-acid biosynthesis; S-adenosyl-L-methionine biosynthesis; S-adenosyl-L-methionine from L-methionine: step 1/1. In terms of biological role, catalyzes the formation of S-adenosylmethionine (AdoMet) from methionine and ATP. The overall synthetic reaction is composed of two sequential steps, AdoMet formation and the subsequent tripolyphosphate hydrolysis which occurs prior to release of AdoMet from the enzyme. This chain is S-adenosylmethionine synthase, found in Rhodococcus jostii (strain RHA1).